We begin with the raw amino-acid sequence, 372 residues long: Sulfate/thiosulfate import ATP-binding protein CysA (372 aa).

An ABC transporter domain is found at I3–L237. Residue G35 to T42 participates in ATP binding.

This sequence belongs to the ABC transporter superfamily. Sulfate/tungstate importer (TC 3.A.1.6) family. The complex is composed of two ATP-binding proteins (CysA), two transmembrane proteins (CysT and CysW) and a solute-binding protein (CysP).

The protein localises to the cell inner membrane. The catalysed reaction is sulfate(out) + ATP + H2O = sulfate(in) + ADP + phosphate + H(+). It catalyses the reaction thiosulfate(out) + ATP + H2O = thiosulfate(in) + ADP + phosphate + H(+). Its function is as follows. Part of the ABC transporter complex CysAWTP involved in sulfate/thiosulfate import. Responsible for energy coupling to the transport system. This chain is Sulfate/thiosulfate import ATP-binding protein CysA, found in Ralstonia nicotianae (strain ATCC BAA-1114 / GMI1000) (Ralstonia solanacearum).